Reading from the N-terminus, the 165-residue chain is UPF0114 protein in repA1-repA2 intergenic region (165 aa).

The next 3 membrane-spanning stretches (helical) occupy residues 10-32 (YASRWLMFPVYIGLSFGFILLTL), 53-75 (LILIVLSLIDIALVGGLLVMVMF), and 136-155 (IMWCVIIHLTFVLSAFGMAC).

This sequence belongs to the UPF0114 family.

The protein resides in the cell membrane. The chain is UPF0114 protein in repA1-repA2 intergenic region from Buchnera aphidicola subsp. Geoica urticularia.